Here is a 149-residue protein sequence, read N- to C-terminus: Calmodulin (149 aa).

At Ala-2 the chain carries N-acetylalanine. EF-hand domains follow at residues Glu-8–Asn-43, Pro-44–Asp-79, Asp-81–Lys-116, and Leu-117–Lys-149. Residues Asp-21, Asp-23, Asp-25, Thr-27, Glu-32, Asp-57, Asp-59, Asn-61, Thr-63, Glu-68, Asp-94, Asp-96, Asn-98, and Glu-105 each coordinate Ca(2+). The residue at position 116 (Lys-116) is an N6,N6,N6-trimethyllysine. Ca(2+)-binding residues include Asp-130, Asp-132, Asp-134, Gln-136, and Glu-141.

It belongs to the calmodulin family.

In terms of biological role, calmodulin mediates the control of a large number of enzymes, ion channels and other proteins by Ca(2+). Among the enzymes to be stimulated by the calmodulin-Ca(2+) complex are a number of protein kinases and phosphatases. This Saccharina japonica (Sweet kelp) protein is Calmodulin (cam).